The primary structure comprises 366 residues: Zinc finger CCCH domain-containing protein 11 (366 aa).

The interval 43 to 66 (LHQAVQPKPDPTKTAAKKKKEEEK) is disordered. Residues 54-79 (TKTAAKKKKEEEKAREKELNDLFKVA) are a coiled coil. 2 C3H1-type zinc fingers span residues 90 to 117 (DPKSIVCEFFKVGQCQKGFKCKFSHDLN) and 160 to 198 (KPTDIVCKYFLDAVEKKQYGWFWVCPNGGKDCHYRHALP). Positions 208-234 (KALLEEESEKIAIEDEIEDQRKKVKTT) form a coiled coil. The segment at 293–338 (YERQEESEANEEPSNKNQDEGPSSSTSNGKEVEESDDEDINIDDDL) is disordered. Over residues 312 to 321 (EGPSSSTSNG) the composition is skewed to polar residues. Residues 325-338 (EESDDEDINIDDDL) are compositionally biased toward acidic residues.

In Oryza sativa subsp. japonica (Rice), this protein is Zinc finger CCCH domain-containing protein 11.